We begin with the raw amino-acid sequence, 140 residues long: ATP synthase epsilon chain (140 aa).

Belongs to the ATPase epsilon chain family. As to quaternary structure, F-type ATPases have 2 components, CF(1) - the catalytic core - and CF(0) - the membrane proton channel. CF(1) has five subunits: alpha(3), beta(3), gamma(1), delta(1), epsilon(1). CF(0) has three main subunits: a, b and c.

The protein localises to the cell inner membrane. Its function is as follows. Produces ATP from ADP in the presence of a proton gradient across the membrane. In Neisseria meningitidis serogroup C (strain 053442), this protein is ATP synthase epsilon chain.